We begin with the raw amino-acid sequence, 395 residues long: Probable FMNH2-dependent monooxygenase SfnC (395 aa).

Involved in the dimethyl sulfide degradation pathway. The sequence is that of Probable FMNH2-dependent monooxygenase SfnC from Pseudomonas putida (Arthrobacter siderocapsulatus).